A 179-amino-acid chain; its full sequence is Large ribosomal subunit protein uL6 (179 aa).

Residues 154–169 (EPYKGKGVKYEHEQIR) are compositionally biased toward basic and acidic residues. A disordered region spans residues 154–179 (EPYKGKGVKYEHEQIRRKAGKSGGKK). Residues 170–179 (RKAGKSGGKK) are compositionally biased toward basic residues.

This sequence belongs to the universal ribosomal protein uL6 family. In terms of assembly, part of the 50S ribosomal subunit.

This protein binds to the 23S rRNA, and is important in its secondary structure. It is located near the subunit interface in the base of the L7/L12 stalk, and near the tRNA binding site of the peptidyltransferase center. This Oleidesulfovibrio alaskensis (strain ATCC BAA-1058 / DSM 17464 / G20) (Desulfovibrio alaskensis) protein is Large ribosomal subunit protein uL6.